The primary structure comprises 498 residues: Glycerol kinase (498 aa).

T12 provides a ligand contact to ADP. ATP contacts are provided by T12, T13, and S14. T12 contacts sn-glycerol 3-phosphate. ADP is bound at residue R16. Positions 82, 83, 134, and 241 each coordinate sn-glycerol 3-phosphate. R82, E83, Y134, D241, and Q242 together coordinate glycerol. T263 and G310 together coordinate ADP. Positions 263, 310, 314, and 411 each coordinate ATP. Residues G411 and N415 each contribute to the ADP site.

The protein belongs to the FGGY kinase family.

It carries out the reaction glycerol + ATP = sn-glycerol 3-phosphate + ADP + H(+). The protein operates within polyol metabolism; glycerol degradation via glycerol kinase pathway; sn-glycerol 3-phosphate from glycerol: step 1/1. Its activity is regulated as follows. Inhibited by fructose 1,6-bisphosphate (FBP). Functionally, key enzyme in the regulation of glycerol uptake and metabolism. Catalyzes the phosphorylation of glycerol to yield sn-glycerol 3-phosphate. The protein is Glycerol kinase of Janthinobacterium sp. (strain Marseille) (Minibacterium massiliensis).